A 223-amino-acid polypeptide reads, in one-letter code: Imidazoleglycerol-phosphate dehydratase (223 aa).

This sequence belongs to the imidazoleglycerol-phosphate dehydratase family.

It carries out the reaction D-erythro-1-(imidazol-4-yl)glycerol 3-phosphate = 3-(imidazol-4-yl)-2-oxopropyl phosphate + H2O. The protein operates within amino-acid biosynthesis; L-histidine biosynthesis; L-histidine from 5-phospho-alpha-D-ribose 1-diphosphate: step 6/9. This Candida albicans (Yeast) protein is Imidazoleglycerol-phosphate dehydratase (HIS3).